Reading from the N-terminus, the 201-residue chain is Protease (201 aa).

Active-site residues include histidine 55, aspartate 72, and cysteine 122.

The protein belongs to the peptidase C5 family. Interacts with protease cofactor pVI-C; this interaction is necessary for protease activation.

It localises to the virion. Its subcellular location is the host nucleus. It carries out the reaction Cleaves proteins of the adenovirus and its host cell at two consensus sites: -Yaa-Xaa-Gly-Gly-|-Xaa- and -Yaa-Xaa-Gly-Xaa-|-Gly- (in which Yaa is Met, Ile or Leu, and Xaa is any amino acid).. With respect to regulation, requires DNA and protease cofactor for maximal activation. Inside nascent virions, becomes partially activated by binding to the viral DNA, allowing it to cleave the cofactor that binds to the protease and fully activates it. Actin, like the viral protease cofactor, seems to act as a cofactor in the cleavage of cytokeratin 18 and of actin itself. Cleaves viral precursor proteins (pTP, pIIIa, pVI, pVII, pVIII, and pX) inside newly assembled particles giving rise to mature virions. Protease complexed to its cofactor slides along the viral DNA to specifically locate and cleave the viral precursors. Mature virions have a weakened organization compared to the unmature virions, thereby facilitating subsequent uncoating. Without maturation, the particle lacks infectivity and is unable to uncoat. Late in adenovirus infection, in the cytoplasm, may participate in the cytoskeleton destruction. Cleaves host cell cytoskeletal keratins K7 and K18. This chain is Protease, found in Ovis aries (Sheep).